Here is a 420-residue protein sequence, read N- to C-terminus: D-tagatose-1,6-bisphosphate aldolase subunit GatZ (420 aa).

It belongs to the GatZ/KbaZ family. GatZ subfamily. In terms of assembly, forms a complex with GatY.

It functions in the pathway carbohydrate metabolism; D-tagatose 6-phosphate degradation; D-glyceraldehyde 3-phosphate and glycerone phosphate from D-tagatose 6-phosphate: step 2/2. In terms of biological role, component of the tagatose-1,6-bisphosphate aldolase GatYZ that is required for full activity and stability of the Y subunit. Could have a chaperone-like function for the proper and stable folding of GatY. When expressed alone, GatZ does not show any aldolase activity. Is involved in the catabolism of galactitol. The polypeptide is D-tagatose-1,6-bisphosphate aldolase subunit GatZ (Escherichia coli (strain SMS-3-5 / SECEC)).